A 763-amino-acid polypeptide reads, in one-letter code: MERSGGNGAGARAGAPSEGAAKGSSLLSAKSTEGATGRFSQSTPRPTGMDGFLKSDERQRLAKERREEREKCLAAREQQILEKQKRAKLQYEKQIEERWRKLEEQRQREDQKRAAVEEKRKQKLREEEERLEAMMRRSLERTQQLELKKKCSWAGSAASGPGGRDGESENTPPLPLTLAASIPPSDTGTATAAAESTNACDKLSTSTMNLPKQTEPPMSKHLSSSIVAISYSPDRALRSPLKSSYKSSPTRTTEKKKNTLLSGVGDAGKGAMTGGEPSQMEKVKKGRGATSVSSGGLGSPLRRCEPPENISKRSSSPVKSKVTAKTYPQSPKTVKPTYIGSPVKYYFPPTPSEETLKKKAEKEKSNKEKEGATGRQTTVLPREETLEKPMADKDATEKYVADKHATEKHSATGGKAEHSAGKSTAGTTDAGEAAKILAEKRRQARLQKEQEEQERLEKEEQERLEKEELKRKAEEERLRIEKQEEEKKQQEEEEKRKAEEKAKEKAEEELLSKEEQEKEKQEKEKKEKAMIEKQIQAEKEAAEAKAQDAAKQMRLEREQIMLQIEQERLERKKRIDEIMKRTRKSDASLEVKKEDPKVEIQPLPDVENKIKPVVPNKIEINVLNTCQKVNVSERAAPETFPQDIFSNGLKPVGGPVHPDVLDGKSNSLDDSTEEVQSMDVSPVSKEELISIPEFSPVSEMIPGMSLDQNGTGNARALQDILDFTGPPAFPKKSSENLSLDDCNKNLIEGFNSPGQETTLNTFC.

Residues 1–11 show a composition bias toward gly residues; sequence MERSGGNGAGA. 3 disordered regions span residues 1–72, 102–127, and 140–531; these read MERS…REKC, LEEQ…LREE, and ERTQ…KAMI. Low complexity predominate over residues 12–31; sequence RAGAPSEGAAKGSSLLSAKS. A compositionally biased stretch (basic and acidic residues) spans 53 to 72; the sequence is LKSDERQRLAKERREEREKC. 2 stretches are compositionally biased toward polar residues: residues 184-212 and 241-251; these read PSDT…NLPK and LKSSYKSSPTR. The segment covering 312–321 has biased composition (low complexity); the sequence is KRSSSPVKSK. 3 stretches are compositionally biased toward basic and acidic residues: residues 354 to 372, 381 to 420, and 437 to 531; these read ETLK…KEGA, PREE…EHSA, and LAEK…KAMI. The stretch at 434-575 forms a coiled coil; that stretch reads AKILAEKRRQ…QERLERKKRI (142 aa).

The protein belongs to the MAP7 family. Interacts (via N-terminus) with microtubules; facilitates microtubule stabilization. Interacts with kinesin-1 family members, KIF5A, KIF5B and KIF5C. As to expression, detected only in the brain and testis (at the protein level).

The protein localises to the cytoplasm. Its subcellular location is the cytoskeleton. It localises to the microtubule organizing center. It is found in the centrosome. The protein resides in the cell projection. The protein localises to the axon. Its function is as follows. Microtubule-stabilizing protein involved in the control of cell motility and neurite outgrowth. Acts as a critical cofactor for kinesin transport; in the proximal axon regulates kinesin-1 family members, KIF5A, KIF5B and KIF5C recruitment to microtubules and contributes to kinesin-1-mediated transport in the axons. In Rattus norvegicus (Rat), this protein is MAP7 domain-containing protein 2 (Map7d2).